Reading from the N-terminus, the 174-residue chain is Cathepsin B-like cysteine proteinase 3 (174 aa).

2 disulfide bridges follow: cysteine 22-cysteine 55 and cysteine 30-cysteine 42. Catalysis depends on residues histidine 122 and asparagine 142.

The protein belongs to the peptidase C1 family.

Expression of the protease correlates with blood-feeding and suggests a role for the protease in blood digestion. The polypeptide is Cathepsin B-like cysteine proteinase 3 (CP-3) (Ostertagia ostertagi (Brown stomach worm)).